A 469-amino-acid polypeptide reads, in one-letter code: UDP-N-acetylmuramate--L-alanine ligase (469 aa).

113–119 (GTHGKTT) lines the ATP pocket.

Belongs to the MurCDEF family.

Its subcellular location is the cytoplasm. It carries out the reaction UDP-N-acetyl-alpha-D-muramate + L-alanine + ATP = UDP-N-acetyl-alpha-D-muramoyl-L-alanine + ADP + phosphate + H(+). The protein operates within cell wall biogenesis; peptidoglycan biosynthesis. Functionally, cell wall formation. The polypeptide is UDP-N-acetylmuramate--L-alanine ligase (Neisseria meningitidis serogroup A / serotype 4A (strain DSM 15465 / Z2491)).